A 120-amino-acid chain; its full sequence is Large ribosomal subunit protein uL22 (120 aa).

This sequence belongs to the universal ribosomal protein uL22 family. Part of the 50S ribosomal subunit.

In terms of biological role, this protein binds specifically to 23S rRNA; its binding is stimulated by other ribosomal proteins, e.g. L4, L17, and L20. It is important during the early stages of 50S assembly. It makes multiple contacts with different domains of the 23S rRNA in the assembled 50S subunit and ribosome. The globular domain of the protein is located near the polypeptide exit tunnel on the outside of the subunit, while an extended beta-hairpin is found that lines the wall of the exit tunnel in the center of the 70S ribosome. In Borreliella afzelii (strain PKo) (Borrelia afzelii), this protein is Large ribosomal subunit protein uL22.